Reading from the N-terminus, the 622-residue chain is 1-deoxy-D-xylulose-5-phosphate synthase (622 aa).

Residues H80 and 121–123 (GHS) each bind thiamine diphosphate. Residue D152 coordinates Mg(2+). Residues 153–154 (GA), N181, Y288, and E370 contribute to the thiamine diphosphate site. N181 provides a ligand contact to Mg(2+).

Belongs to the transketolase family. DXPS subfamily. Homodimer. Requires Mg(2+) as cofactor. The cofactor is thiamine diphosphate.

It catalyses the reaction D-glyceraldehyde 3-phosphate + pyruvate + H(+) = 1-deoxy-D-xylulose 5-phosphate + CO2. It functions in the pathway metabolic intermediate biosynthesis; 1-deoxy-D-xylulose 5-phosphate biosynthesis; 1-deoxy-D-xylulose 5-phosphate from D-glyceraldehyde 3-phosphate and pyruvate: step 1/1. Its function is as follows. Catalyzes the acyloin condensation reaction between C atoms 2 and 3 of pyruvate and glyceraldehyde 3-phosphate to yield 1-deoxy-D-xylulose-5-phosphate (DXP). The sequence is that of 1-deoxy-D-xylulose-5-phosphate synthase from Shewanella putrefaciens (strain CN-32 / ATCC BAA-453).